Reading from the N-terminus, the 161-residue chain is MAQTTTLILLLATLLVAATTVSGQGPHIPLAPSPSVNEAMNCAAGLAVCLPAITQRGPPSQECCTAVETALTTQLSCLCGFIKSPMLLIPFNVTDFNALFSKTCGLTTDPNLCSETAAQAPLPKTAAPVPGAPKSDKDAASKLAGTGLVGIVVITIAAMFY.

Residues 1 to 23 (MAQTTTLILLLATLLVAATTVSG) form the signal peptide. Cystine bridges form between Cys-42-Cys-79, Cys-49-Cys-63, Cys-64-Cys-104, and Cys-77-Cys-113. An N-linked (GlcNAc...) asparagine glycan is attached at Asn-92. The GPI-anchor amidated aspartate moiety is linked to residue Asp-138. Positions 139 to 161 (AASKLAGTGLVGIVVITIAAMFY) are cleaved as a propeptide — removed in mature form.

This sequence belongs to the plant LTP family.

Its subcellular location is the cell membrane. In terms of biological role, probable lipid transfer protein. This Arabidopsis thaliana (Mouse-ear cress) protein is Non-specific lipid transfer protein GPI-anchored 24.